A 224-amino-acid chain; its full sequence is PKHD-type hydroxylase Sbal_3634 (224 aa).

Residues 78–176 (QFYPPLFNRY…RTAAFMWLQS (99 aa)) enclose the Fe2OG dioxygenase domain. Fe cation-binding residues include histidine 96, aspartate 98, and histidine 157. Arginine 167 contacts 2-oxoglutarate.

Fe(2+) serves as cofactor. The cofactor is L-ascorbate.

This is PKHD-type hydroxylase Sbal_3634 from Shewanella baltica (strain OS155 / ATCC BAA-1091).